The chain runs to 264 residues: Thiazole synthase (264 aa).

The active-site Schiff-base intermediate with DXP is the lysine 98. Residues glycine 159, 185 to 186 (AG), and 207 to 208 (AT) contribute to the 1-deoxy-D-xylulose 5-phosphate site.

Belongs to the ThiG family. Homotetramer. Forms heterodimers with either ThiH or ThiS.

It localises to the cytoplasm. The catalysed reaction is [ThiS sulfur-carrier protein]-C-terminal-Gly-aminoethanethioate + 2-iminoacetate + 1-deoxy-D-xylulose 5-phosphate = [ThiS sulfur-carrier protein]-C-terminal Gly-Gly + 2-[(2R,5Z)-2-carboxy-4-methylthiazol-5(2H)-ylidene]ethyl phosphate + 2 H2O + H(+). It participates in cofactor biosynthesis; thiamine diphosphate biosynthesis. Catalyzes the rearrangement of 1-deoxy-D-xylulose 5-phosphate (DXP) to produce the thiazole phosphate moiety of thiamine. Sulfur is provided by the thiocarboxylate moiety of the carrier protein ThiS. In vitro, sulfur can be provided by H(2)S. The protein is Thiazole synthase of Mycobacterium marinum (strain ATCC BAA-535 / M).